Reading from the N-terminus, the 113-residue chain is U11-theraphotoxin-Hhn1n (113 aa).

The N-terminal stretch at 1–21 (MNTVRVTFLLVFVLAVSLGQA) is a signal peptide. A propeptide spanning residues 22–74 (DKDENRMEMQEKTEQGKSYLDFAENLLLQKLEELEAKLLEEDSEESRNSRQKR) is cleaved from the precursor. Residues 60-69 (LEEDSEESRN) show a composition bias toward basic and acidic residues. Residues 60–83 (LEEDSEESRNSRQKRCIGEGVPCD) are disordered. 2 disulfides stabilise this stretch: C75/C90 and C89/C110.

This sequence belongs to the neurotoxin 14 (magi-1) family. 01 (HNTX-16) subfamily. As to expression, expressed by the venom gland.

Its subcellular location is the secreted. Its function is as follows. Probable ion channel inhibitor. This Cyriopagopus hainanus (Chinese bird spider) protein is U11-theraphotoxin-Hhn1n.